The chain runs to 248 residues: Probable transcriptional regulatory protein blr1534 (248 aa).

A disordered region spans residues 1-21; it reads MAGHSQFKNIMHRKGRQDAQK.

Belongs to the TACO1 family.

It is found in the cytoplasm. The protein is Probable transcriptional regulatory protein blr1534 of Bradyrhizobium diazoefficiens (strain JCM 10833 / BCRC 13528 / IAM 13628 / NBRC 14792 / USDA 110).